We begin with the raw amino-acid sequence, 237 residues long: Ly6/PLAUR domain-containing protein 8 (237 aa).

An N-terminal signal peptide occupies residues 1–19; sequence MKGILVAGITAVLVAAVES. Residues asparagine 45, asparagine 73, asparagine 107, asparagine 118, asparagine 132, asparagine 172, asparagine 175, and asparagine 185 are each glycosylated (N-linked (GlcNAc...) asparagine). Residues 125 to 176 form the UPAR/Ly6 domain; that stretch reads CPACYESNGTSCHGKPWKCYEEEQCVFLVAELKNDIESKSLVLKGCSNVSNA. A lipid anchor (GPI-anchor amidated asparagine) is attached at asparagine 215. The propeptide at 216-237 is removed in mature form; that stretch reads VGSKASLYLLALASLLLRGLLP.

The protein belongs to the CNF-like-inhibitor family. In terms of processing, highly N-glycosylated. Not O-glycosylated. GPI-anchored. The GPI-anchor is cleaved, leading to secretion into the colonic lumen. As to expression, expressed in the large intestine. Preferentially expressed on the epithelial layer exposed to the lumen (at protein level).

Its subcellular location is the cell membrane. It is found in the secreted. Its function is as follows. Secreted protein specifically required to prevent invasion of Gram-negative bacteria in the inner mucus layer of the colon epithelium, a portion of the large intestine which is free of commensal microbiota. Prevents invasion of flagellated microbiota by binding to the flagellum of bacteria, such as P.mirabilis, thereby inhibiting bacterial motility in the intestinal lumen. Segregation of intestinal bacteria and epithelial cells in the colon is required to preserve intestinal homeostasis. In Homo sapiens (Human), this protein is Ly6/PLAUR domain-containing protein 8.